The chain runs to 97 residues: ESAT-6-like protein EsxS (97 aa).

Belongs to the WXG100 family. CFP-10 subfamily. Forms a tight complex with EsxR. Exists in heterodimeric and heterotetrameric forms.

It localises to the secreted. This chain is ESAT-6-like protein EsxS, found in Mycobacterium tuberculosis (strain ATCC 25618 / H37Rv).